The chain runs to 231 residues: Large ribosomal subunit protein uL1 (231 aa).

The protein belongs to the universal ribosomal protein uL1 family. As to quaternary structure, part of the 50S ribosomal subunit.

Functionally, binds directly to 23S rRNA. The L1 stalk is quite mobile in the ribosome, and is involved in E site tRNA release. Protein L1 is also a translational repressor protein, it controls the translation of the L11 operon by binding to its mRNA. This Pseudomonas syringae pv. syringae (strain B728a) protein is Large ribosomal subunit protein uL1.